We begin with the raw amino-acid sequence, 296 residues long: GTPase Era (296 aa).

Positions 7–174 (RAGFVAIVGR…LDEIAAGLPQ (168 aa)) constitute an Era-type G domain. The tract at residues 15–22 (GRPNVGKS) is G1. 15-22 (GRPNVGKS) provides a ligand contact to GTP. Residues 41–45 (QTTRH) form a G2 region. The tract at residues 62–65 (DTPG) is G3. Residues 62–66 (DTPGF) and 123–126 (SKID) contribute to the GTP site. Positions 123–126 (SKID) are G4. Residues 153–155 (VSA) form a G5 region. The KH type-2 domain occupies 205–281 (VGDELPYGCT…HLEIYIKVRK (77 aa)).

Belongs to the TRAFAC class TrmE-Era-EngA-EngB-Septin-like GTPase superfamily. Era GTPase family. As to quaternary structure, monomer.

It is found in the cytoplasm. The protein resides in the cell inner membrane. An essential GTPase that binds both GDP and GTP, with rapid nucleotide exchange. Plays a role in 16S rRNA processing and 30S ribosomal subunit biogenesis and possibly also in cell cycle regulation and energy metabolism. This chain is GTPase Era, found in Bordetella parapertussis (strain 12822 / ATCC BAA-587 / NCTC 13253).